The primary structure comprises 149 residues: Putative pre-16S rRNA nuclease (149 aa).

Belongs to the YqgF nuclease family.

The protein resides in the cytoplasm. In terms of biological role, could be a nuclease involved in processing of the 5'-end of pre-16S rRNA. This chain is Putative pre-16S rRNA nuclease, found in Burkholderia ambifaria (strain MC40-6).